Here is a 191-residue protein sequence, read N- to C-terminus: A-type ATP synthase subunit E 1 (191 aa).

The protein belongs to the V-ATPase E subunit family. As to quaternary structure, has multiple subunits with at least A(3), B(3), C, D, E, F, H, I and proteolipid K(x).

Its subcellular location is the cell membrane. Its function is as follows. Component of the A-type ATP synthase that produces ATP from ADP in the presence of a proton gradient across the membrane. This is A-type ATP synthase subunit E 1 from Methanospirillum hungatei JF-1 (strain ATCC 27890 / DSM 864 / NBRC 100397 / JF-1).